The chain runs to 504 residues: ADP,ATP carrier protein 3 (504 aa).

A run of 12 helical transmembrane segments spans residues 23-43 (LKLF…FGAL), 59-79 (IISF…TILY), 90-110 (YVFY…AYII), 146-166 (YGLM…LMFW), 183-203 (PVLG…LVFF), 230-250 (EMLQ…MLLF), 296-316 (IALL…PWKA), 329-349 (VHFM…FMII), 364-384 (LLTP…IIFI), 386-406 (EIGS…VGAI), 449-469 (FGKS…PTAT), and 473-493 (IIIY…WDVV).

Belongs to the ADP/ATP translocase tlc family.

The protein resides in the cell membrane. In terms of biological role, provides the rickettsial cell with host ATP in exchange for rickettsial ADP. This is an obligate exchange system. This energy acquiring activity is an important component of rickettsial parasitism. The protein is ADP,ATP carrier protein 3 (tlcC) of Rickettsia bellii (strain RML369-C).